Consider the following 361-residue polypeptide: Peptide chain release factor 1 (361 aa).

The residue at position 235 (Q235) is an N5-methylglutamine. Residues 288–307 (AARSADRKDQVGSGDRSERI) are disordered.

It belongs to the prokaryotic/mitochondrial release factor family. In terms of processing, methylated by PrmC. Methylation increases the termination efficiency of RF1.

The protein resides in the cytoplasm. Peptide chain release factor 1 directs the termination of translation in response to the peptide chain termination codons UAG and UAA. The protein is Peptide chain release factor 1 of Nitrobacter hamburgensis (strain DSM 10229 / NCIMB 13809 / X14).